The sequence spans 220 residues: uncharacterized protein (220 aa).

The chain crosses the membrane as a helical span at residues Phe-10 to Phe-30.

Its subcellular location is the membrane. This is an uncharacterized protein from Methanocaldococcus jannaschii (strain ATCC 43067 / DSM 2661 / JAL-1 / JCM 10045 / NBRC 100440) (Methanococcus jannaschii).